Consider the following 247-residue polypeptide: ATP synthase subunit a, chloroplastic (247 aa).

Helical transmembrane passes span 38 to 58, 95 to 115, 134 to 154, 199 to 219, and 220 to 240; these read QVLI…ILVV, VPFI…GALL, INTT…AGIS, LVVV…VMFL, and GLFT…AYIG.

The protein belongs to the ATPase A chain family. F-type ATPases have 2 components, CF(1) - the catalytic core - and CF(0) - the membrane proton channel. CF(1) has five subunits: alpha(3), beta(3), gamma(1), delta(1), epsilon(1). CF(0) has four main subunits: a, b, b' and c.

Its subcellular location is the plastid. It is found in the chloroplast thylakoid membrane. Functionally, key component of the proton channel; it plays a direct role in the translocation of protons across the membrane. This chain is ATP synthase subunit a, chloroplastic, found in Pisum sativum (Garden pea).